We begin with the raw amino-acid sequence, 362 residues long: Variable large protein 25 (362 aa).

The signal sequence occupies residues 1 to 26; the sequence is MRKRISAIINKLNISIMMMIVVLMIG. Residue Cys-27 is the site of N-palmitoyl cysteine attachment. The S-diacylglycerol cysteine moiety is linked to residue Cys-27.

The protein belongs to the variable large protein (Vlp) family. Alpha subfamily.

It is found in the cell outer membrane. Its function is as follows. The Vlp and Vsp proteins are antigenically distinct proteins, only one vlp or vsp gene is transcriptionally active at any one time. Switching between these genes is a mechanism of host immune response evasion. The sequence is that of Variable large protein 25 from Borrelia hermsii.